Here is a 1362-residue protein sequence, read N- to C-terminus: MITSNNNNKNNNKKDVEMKSNEEEGDEIFFSILSGDTNNLFKFLNNNNSNNNNNNNNNNINNSIDIYLPYIIVGILEKNKDLLDEDENLKKLFYSPIYSKSIHNINQYQSLNFDHINEFIKDQVRIRKKLNHVNQDKKDTYLDNIDNPKYQFENGDKEVKMKLVLSDIIALLEFSEMQQSLTISKETKYDAPFIDTPIYNNELNLIFPIICYKCLKHIDFNKLTLSILFLNQANYLIKLLLSNNPNEFNEIIEIVISSIGLIGVEKVKRVLLEICKLSKYCSRFIRTELINRQMLPDLVLLITSQFVKDEIDLLSNIISNRIENQWLKEYISQKDQFSTFNEIRDSLFSTLELISKEISSNSNNNSNNLEHSFIVKSIIRLYCGFSGLLGIKMNQQEISISLSFIEKSIFKNYSKIFLCFLLVCEGLVKTIHPKKELVGYLNHLCKVGNCDELLLLISIYFHTHQLQNIALLVKNILGFRPSIHTESLNQIGEILTKEIYTESLVAKRAQQLPIIEKLNTNHQNISIVCVYHLLSERIFEKYETDVGNWCWSQLTKSSTPIHYLLPSLLDQLCKNIIEPSINNNNTSSTTSIINTSTTAAAASTTASNANTTAATTTTTTAATITTATTTGTTTGISPSSSTTTTSSTGGATSTSISSPNSTSLGNSYLFSTFSSTSSSSSSGLPFYMKRISESIIMNSIQQSQSNLSVQILIIYFVLRYNDSVIKFKSEQKGKPIQFLIETTQLREYNIEFLSKLPIQNCINVILSNQSDYFYIIPPFLYLILSQFPQFFNINLLLLEEERLLNPIEKFIYLPNFYSINGGANNNSGGITNEFLKDTLKRTLSQPTSVQLILRYLNTLSVKELLPFTTTLLDNLLPIIIKNRSLPSVSALISPFVEIWERVFPISQSSIALKTINILTCINDDKSTNNNKDLEDYNNNNNNNNDDVKMKDKEKEDKEEEEEEEILLPISNYTYTDIISDPLVIFRSHPTVFTCPPLFKILLQILFFYMVSSKKNLQNQLHTSSGSGSGTTSNVTLNKQQQEDVSTLILTQESTIIQILLEICLIDGIDTKGLNKILRNKNKKFKESYDPVDIEEIRCQICSFIHQMFIDKPLIIKLVHFQGYLSQLLPITVTLIPSMHICFEFIPELLAQPSLEKQIFAIQLLSYLSEKFPIPKSLKICRQSQTRISFNLNSNTLSYDDRIKFLHSILPSITRITKTFPLLAEDFVSILMEQLPNKHNYQQNLKSFISSIDFNLNSNLNNYTNSIYLQNNKNNNNSSNNNNSNNQNDLLNIDIDNNINSNNNNNLRNINFKKVSNDDKSFFSKVSKNESWLSIKENNDPFNIPIEQEIHQAIQIIIKNLSK.

Over residues 1–10 (MITSNNNNKN) the composition is skewed to low complexity. 3 disordered regions span residues 1–20 (MITS…EMKS), 629–660 (TTGT…SSPN), and 928–963 (NNNK…EEEE). A compositionally biased stretch (basic and acidic residues) spans 945–955 (DDVKMKDKEKE).

Belongs to the Integrator subunit 2 family. In terms of assembly, component of the Integrator complex. The core complex associates with protein phosphatase 2A subunits, to form the Integrator-PP2A (INTAC) complex.

The protein resides in the nucleus. Its subcellular location is the cytoplasm. In terms of biological role, component of the integrator complex, a multiprotein complex that terminates RNA polymerase II (Pol II) transcription in the promoter-proximal region of genes. The integrator complex provides a quality checkpoint during transcription elongation by driving premature transcription termination of transcripts that are unfavorably configured for transcriptional elongation: the complex terminates transcription by (1) catalyzing dephosphorylation of the C-terminal domain (CTD) of Pol II subunit polr2a, (2) degrading the exiting nascent RNA transcript via endonuclease activity and (3) promoting the release of Pol II from bound DNA. The integrator complex is also involved in terminating the synthesis of non-coding Pol II transcripts, such as enhancer RNAs (eRNAs), small nuclear RNAs (snRNAs), telomerase RNAs and long non-coding RNAs (lncRNAs). In Dictyostelium discoideum (Social amoeba), this protein is Integrator complex subunit 2 homolog (ints2).